An 843-amino-acid polypeptide reads, in one-letter code: INO80 complex subunit D-B (843 aa).

The span at 159–175 shows a compositional bias: basic and acidic residues; it reads TLNHKQKQQDHSVDTNH. Disordered regions lie at residues 159-216, 221-240, 503-550, 695-726, and 791-843; these read TLNH…PTVR, FKTSSSLQDTHQGSKDSTDN, YHHH…LPQG, SLLHPSEDAFPPSPPSPQPPLTPPSSVGHLTD, and LSTP…TAAP. Composition is skewed to polar residues over residues 176-187, 197-216, and 221-231; these read LRTSSLPSTLSH, RATQTPINPSSPRAATPTVR, and FKTSSSLQDTH. Positions 503 to 540 are enriched in basic residues; sequence YHHHQQIQRHRPLKKAKPPALSKKHKKKGKRGTQRRPQ. The segment covering 705-717 has biased composition (pro residues); that stretch reads PPSPPSPQPPLTP. The span at 796–821 shows a compositional bias: low complexity; sequence QPSSALSALPQSSQTRSTTTSPTSQT.

Belongs to the INO80D family. In terms of assembly, component of the chromatin-remodeling INO80 complex.

It is found in the nucleus. Putative regulatory component of the chromatin remodeling INO80 complex which is involved in transcriptional regulation, DNA replication and probably DNA repair. The chain is INO80 complex subunit D-B (ino80db) from Danio rerio (Zebrafish).